Here is a 382-residue protein sequence, read N- to C-terminus: UDP-4-amino-4-deoxy-L-arabinose--oxoglutarate aminotransferase (382 aa).

Lysine 182 carries the N6-(pyridoxal phosphate)lysine modification.

The protein belongs to the DegT/DnrJ/EryC1 family. ArnB subfamily. In terms of assembly, homodimer. Pyridoxal 5'-phosphate serves as cofactor.

The catalysed reaction is UDP-4-amino-4-deoxy-beta-L-arabinose + 2-oxoglutarate = UDP-beta-L-threo-pentopyranos-4-ulose + L-glutamate. Its pathway is nucleotide-sugar biosynthesis; UDP-4-deoxy-4-formamido-beta-L-arabinose biosynthesis; UDP-4-deoxy-4-formamido-beta-L-arabinose from UDP-alpha-D-glucuronate: step 2/3. It functions in the pathway bacterial outer membrane biogenesis; lipopolysaccharide biosynthesis. Catalyzes the conversion of UDP-4-keto-arabinose (UDP-Ara4O) to UDP-4-amino-4-deoxy-L-arabinose (UDP-L-Ara4N). The modified arabinose is attached to lipid A and is required for resistance to polymyxin and cationic antimicrobial peptides. This is UDP-4-amino-4-deoxy-L-arabinose--oxoglutarate aminotransferase from Yersinia enterocolitica serotype O:8 / biotype 1B (strain NCTC 13174 / 8081).